The primary structure comprises 245 residues: tRNA1(Val) (adenine(37)-N6)-methyltransferase (245 aa).

Belongs to the methyltransferase superfamily. tRNA (adenine-N(6)-)-methyltransferase family.

The protein localises to the cytoplasm. It carries out the reaction adenosine(37) in tRNA1(Val) + S-adenosyl-L-methionine = N(6)-methyladenosine(37) in tRNA1(Val) + S-adenosyl-L-homocysteine + H(+). In terms of biological role, specifically methylates the adenine in position 37 of tRNA(1)(Val) (anticodon cmo5UAC). This is tRNA1(Val) (adenine(37)-N6)-methyltransferase from Escherichia coli O157:H7 (strain EC4115 / EHEC).